A 135-amino-acid chain; its full sequence is 6-pyruvoyl tetrahydrobiopterin synthase (135 aa).

Histidine 17 lines the Zn(2+) pocket. The active-site Proton acceptor is the cysteine 36. Zn(2+) contacts are provided by histidine 40 and histidine 42. Catalysis depends on charge relay system residues histidine 81 and glutamate 124.

This sequence belongs to the PTPS family. As to quaternary structure, homohexamer formed of two homotrimers in a head to head fashion. Zn(2+) is required as a cofactor.

It catalyses the reaction 7,8-dihydroneopterin 3'-triphosphate = 6-pyruvoyl-5,6,7,8-tetrahydropterin + triphosphate + H(+). Its pathway is cofactor biosynthesis; tetrahydrobiopterin biosynthesis; tetrahydrobiopterin from 7,8-dihydroneopterin triphosphate: step 1/3. Its function is as follows. Involved in the biosynthesis of tetrahydrobiopterin, an essential cofactor of aromatic amino acid hydroxylases. Catalyzes the transformation of 7,8-dihydroneopterin triphosphate into 6-pyruvoyl tetrahydropterin. The chain is 6-pyruvoyl tetrahydrobiopterin synthase (ptsA) from Dictyostelium discoideum (Social amoeba).